The primary structure comprises 974 residues: GATOR2 complex protein WDR59 (974 aa).

7 WD repeats span residues 57–98 (QSKW…GEVG), 103–143 (GHTR…KPTV), 146–185 (SAVA…TAVE), 189–229 (AHLS…KYLN), 232–276 (PCQV…TPVH), 278–318 (FVGH…RVDS), and 319–362 (QMQR…TASH). Residues 350-374 (HTEDTDHQHTASHGEEEALKEDPPR) form a disordered region. In terms of domain architecture, RWD spans 393-494 (QEFSLINVQI…RQLVSCLESF (102 aa)). At S564 the chain carries Phosphoserine. Residues 668-706 (LNVNDIQETCQKNAASALLVGRKDLVQVWSLATVATDLC) form a WD 8 repeat. Phosphoserine is present on residues S821, S822, and S830. A disordered region spans residues 831–852 (LTYSDPRERERDQHDKNKRLLD). Residues 835-851 (DPRERERDQHDKNKRLL) show a composition bias toward basic and acidic residues. Residues 901–920 (YCSHCRSEVRGTQCAICKGF) form a C4-type zinc finger. Residues C902, C905, C914, C917, C927, C938, H943, H946, H949, C960, C964, C966, and C968 each coordinate Zn(2+). An RING-type; atypical zinc finger spans residues 921–973 (TFQCAICHVAVRGSSNFCLTCGHGGHTSHMMEWFRTQEVCPTGCGCHCLLEST).

It belongs to the WD repeat WDR59 family. In terms of assembly, component of the GATOR2 subcomplex, composed of MIOS, SEC13, SEH1L, WDR24 and WDR59. The GATOR2 complex interacts with CASTOR1 and CASTOR2; the interaction is negatively regulated by arginine. The GATOR2 complex interacts with SESN1, SESN2 and SESN3; the interaction is negatively regulated by amino acids. Interacts with DDB1-CUL4A/B E3 ligase complexes.

Its subcellular location is the lysosome membrane. Its activity is regulated as follows. The GATOR2 complex is negatively regulated by the upstream amino acid sensors CASTOR1 and SESN2, which sequester the GATOR2 complex in absence of amino acids. In the presence of abundant amino acids, GATOR2 is released from CASTOR1 and SESN2 and activated. As a component of the GATOR2 complex, functions as an activator of the amino acid-sensing branch of the mTORC1 signaling pathway. The GATOR2 complex indirectly activates mTORC1 through the inhibition of the GATOR1 subcomplex. GATOR2 probably acts as an E3 ubiquitin-protein ligase toward GATOR1. In the presence of abundant amino acids, the GATOR2 complex mediates ubiquitination of the NPRL2 core component of the GATOR1 complex, leading to GATOR1 inactivation. In the absence of amino acids, GATOR2 is inhibited, activating the GATOR1 complex. The chain is GATOR2 complex protein WDR59 from Homo sapiens (Human).